A 397-amino-acid chain; its full sequence is Cysteine desulfurase IscS (397 aa).

Pyridoxal 5'-phosphate contacts are provided by residues 72–73 (GS), Asn-152, Gln-180, and 200–202 (SAH). Position 203 is an N6-(pyridoxal phosphate)lysine (Lys-203). Thr-238 provides a ligand contact to pyridoxal 5'-phosphate. Residue Cys-328 is the Cysteine persulfide intermediate of the active site. A [2Fe-2S] cluster-binding site is contributed by Cys-328.

Belongs to the class-V pyridoxal-phosphate-dependent aminotransferase family. NifS/IscS subfamily. Homodimer. Forms a heterotetramer with IscU, interacts with other sulfur acceptors. Pyridoxal 5'-phosphate is required as a cofactor.

Its subcellular location is the cytoplasm. The catalysed reaction is (sulfur carrier)-H + L-cysteine = (sulfur carrier)-SH + L-alanine. It functions in the pathway cofactor biosynthesis; iron-sulfur cluster biosynthesis. In terms of biological role, master enzyme that delivers sulfur to a number of partners involved in Fe-S cluster assembly, tRNA modification or cofactor biosynthesis. Catalyzes the removal of elemental sulfur atoms from cysteine to produce alanine. Functions as a sulfur delivery protein for Fe-S cluster synthesis onto IscU, an Fe-S scaffold assembly protein, as well as other S acceptor proteins. In Clostridium botulinum (strain ATCC 19397 / Type A), this protein is Cysteine desulfurase IscS.